The sequence spans 575 residues: NEDD4-binding protein 2-like 2 (575 aa).

Composition is skewed to basic and acidic residues over residues 69–87 (QEDK…EMPG), 129–142 (PPEK…KSET), and 149–167 (DSKR…KLEM). Disordered regions lie at residues 69-169 (QEDK…EMDT) and 555-575 (GEQR…ADDY). Residues 162–194 (SKKLEMDTELSQFYKEIEELENENEASQGSCTE) adopt a coiled-coil conformation. Residues 564–575 (GSHSQVSIADDY) show a composition bias toward polar residues.

The protein is NEDD4-binding protein 2-like 2 (N4bp2l2) of Mus musculus (Mouse).